The sequence spans 219 residues: Ribose-5-phosphate isomerase A (219 aa).

Substrate contacts are provided by residues 28 to 31, 81 to 84, and 94 to 97; these read SGST, DGAD, and KGGG. Glu-103 acts as the Proton acceptor in catalysis. Position 121 (Lys-121) interacts with substrate.

Belongs to the ribose 5-phosphate isomerase family. As to quaternary structure, homodimer.

The catalysed reaction is aldehydo-D-ribose 5-phosphate = D-ribulose 5-phosphate. It functions in the pathway carbohydrate degradation; pentose phosphate pathway; D-ribose 5-phosphate from D-ribulose 5-phosphate (non-oxidative stage): step 1/1. In terms of biological role, catalyzes the reversible conversion of ribose-5-phosphate to ribulose 5-phosphate. The polypeptide is Ribose-5-phosphate isomerase A (Haemophilus influenzae (strain PittGG)).